A 152-amino-acid chain; its full sequence is Toxin coregulated pilus biosynthesis protein S (152 aa).

The N-terminal stretch at 1 to 20 (MNIKLSFISIAFLSLSFNVA) is a signal peptide.

Its subcellular location is the periplasm. The protein localises to the secreted. Its function is as follows. The toxin coregulated pilus (TCP) is essential for successful colonization of the small intestine. This is Toxin coregulated pilus biosynthesis protein S (tcpS) from Vibrio cholerae serotype O1 (strain ATCC 39315 / El Tor Inaba N16961).